The primary structure comprises 353 residues: UPF0283 membrane protein YcjF (353 aa).

Residues 1 to 19 (MSEPLKPRIDFAEPLKEEP) show a composition bias toward basic and acidic residues. The tract at residues 1-35 (MSEPLKPRIDFAEPLKEEPTSAFKAQQTFSEAESR) is disordered. Residues 1-69 (MSEPLKPRID…LRPKRSLWRK (69 aa)) are Periplasmic-facing. The chain crosses the membrane as a helical span at residues 70–90 (MVMGGLALFGASVVGQGVQWT). Over 91 to 99 (MNAWQTQDW) the chain is Cytoplasmic. Residues 100–120 (VALGGCAAGALIVGAGVGSVV) traverse the membrane as a helical segment. Topologically, residues 121–212 (TEWRRLWRLR…ARREISRFAA (92 aa)) are periplasmic. A helical membrane pass occupies residues 213 to 233 (ESTLMIAVSPLALVDMAFIAW). Residues 234–353 (RNLRLINRIA…LQKSKSSPEK (120 aa)) lie on the Cytoplasmic side of the membrane.

It belongs to the UPF0283 family.

It is found in the cell inner membrane. This chain is UPF0283 membrane protein YcjF (ycjF), found in Salmonella typhimurium (strain LT2 / SGSC1412 / ATCC 700720).